We begin with the raw amino-acid sequence, 88 residues long: Small ribosomal subunit protein bS20 (88 aa).

It belongs to the bacterial ribosomal protein bS20 family.

In terms of biological role, binds directly to 16S ribosomal RNA. This chain is Small ribosomal subunit protein bS20, found in Clostridium botulinum (strain 657 / Type Ba4).